The primary structure comprises 1066 residues: Protein sts5 (1066 aa).

The segment covering 18–28 (QQDPSDAQSSP) has biased composition (low complexity). 3 disordered regions span residues 18–40 (QQDP…SLTT), 154–178 (ATST…SPNS), and 247–286 (SNFR…RKNL). Over residues 29–40 (TFVPSANPSLTT) the composition is skewed to polar residues. A Phosphothreonine modification is found at Thr-157. A compositionally biased stretch (low complexity) spans 168–178 (HSVASVSSPNS). Position 262 is a phosphothreonine (Thr-262). Ser-264 is subject to Phosphoserine. The segment covering 270 to 280 (SGSGFSSGGSG) has biased composition (gly residues). The residue at position 377 (Thr-377) is a Phosphothreonine. The disordered stretch occupies residues 454–480 (SSAANKERQTSSGNQGSSNNSGNDKPK). A compositionally biased stretch (low complexity) spans 464–476 (SSGNQGSSNNSGN). The 75-residue stretch at 482–556 (VWFKPSDKRV…AQVSALLHDT (75 aa)) folds into the CSD2 domain. In terms of domain architecture, RNB spans 618-934 (NINSSSATDF…VHYQLQLLLR (317 aa)). The region spanning 983–1033 (QDGLVCFVAPSYFDVFFPSLGMEKRVHLDLLNLTHVRFEEDQGILSLYDES) is the DIS3L2 C-terminal domain.

Belongs to the RNR ribonuclease family. Interacts with serine/threonine phosphatase ppe1, protein kinase C and an osmosensing MAP kinase.

The protein localises to the cytoplasm. Functionally, required for the maintenance of cell shape during interphase. Required for localization of cortical actin to the growing tips before mitosis. The polypeptide is Protein sts5 (sts5) (Schizosaccharomyces pombe (strain 972 / ATCC 24843) (Fission yeast)).